Reading from the N-terminus, the 20-residue chain is NLIQLSNMIKCAIPGSQPLF.

The protein belongs to the phospholipase A2 family. Group I subfamily. Requires Ca(2+) as cofactor. In terms of tissue distribution, expressed by the venom gland.

Its subcellular location is the secreted. It catalyses the reaction a 1,2-diacyl-sn-glycero-3-phosphocholine + H2O = a 1-acyl-sn-glycero-3-phosphocholine + a fatty acid + H(+). Functionally, snake venom phospholipase A2 (PLA2) that exhibits weak enzymatic activity. PLA2 catalyzes the calcium-dependent hydrolysis of the 2-acyl groups in 3-sn-phosphoglycerides. This is Phospholipase A2 II-5b from Notechis scutatus scutatus (Mainland tiger snake).